The sequence spans 107 residues: Proteinase inhibitor 1 (107 aa).

The first 23 residues, 1–23 (MELKFAHIIVFFLLATSFETLMA), serve as a signal peptide directing secretion. The propeptide occupies 24 to 36 (RKESDGPEVIQLL).

This sequence belongs to the protease inhibitor I13 (potato type I serine protease inhibitor) family.

The polypeptide is Proteinase inhibitor 1 (Solanum tuberosum (Potato)).